The sequence spans 237 residues: Methylosome subunit pICln (237 aa).

At serine 2 the chain carries N-acetylserine. Residues serine 102, serine 144, serine 193, and serine 195 each carry the phosphoserine modification. Threonine 223 is modified (phosphothreonine).

This sequence belongs to the pICln (TC 1.A.47) family. As to quaternary structure, component of the methylosome, a 20S complex containing at least PRMT5/SKB1, WDR77/MEP50 and CLNS1A/pICln. May mediate SNRPD1 and SNRPD3 methylation. Forms a 6S pICln-Sm complex composed of CLNS1A/pICln, SNRPD1, SNRPD2, SNRPE, SNRPF and SNRPG; ring-like structure where CLNS1A/pICln mimics additional Sm proteins and which is unable to assemble into the core snRNP. Interacts with LSM10 and LSM11.

The protein resides in the cytoplasm. It is found in the cytosol. It localises to the nucleus. Its subcellular location is the cytoskeleton. Involved in both the assembly of spliceosomal snRNPs and the methylation of Sm proteins. Chaperone that regulates the assembly of spliceosomal U1, U2, U4 and U5 small nuclear ribonucleoproteins (snRNPs), the building blocks of the spliceosome, and thereby plays an important role in the splicing of cellular pre-mRNAs. Most spliceosomal snRNPs contain a common set of Sm proteins SNRPB, SNRPD1, SNRPD2, SNRPD3, SNRPE, SNRPF and SNRPG that assemble in a heptameric protein ring on the Sm site of the small nuclear RNA to form the core snRNP (Sm core). In the cytosol, the Sm proteins SNRPD1, SNRPD2, SNRPE, SNRPF and SNRPG are trapped in an inactive 6S pICln-Sm complex by the chaperone CLNS1A that controls the assembly of the core snRNP. Dissociation by the SMN complex of CLNS1A from the trapped Sm proteins and their transfer to an SMN-Sm complex triggers the assembly of core snRNPs and their transport to the nucleus. The protein is Methylosome subunit pICln (CLNS1A) of Pongo abelii (Sumatran orangutan).